We begin with the raw amino-acid sequence, 241 residues long: Probable transcriptional regulatory protein H16_A0916 (241 aa).

This sequence belongs to the TACO1 family.

It localises to the cytoplasm. This is Probable transcriptional regulatory protein H16_A0916 from Cupriavidus necator (strain ATCC 17699 / DSM 428 / KCTC 22496 / NCIMB 10442 / H16 / Stanier 337) (Ralstonia eutropha).